We begin with the raw amino-acid sequence, 95 residues long: Co-chaperonin GroES (95 aa).

The protein belongs to the GroES chaperonin family. In terms of assembly, heptamer of 7 subunits arranged in a ring. Interacts with the chaperonin GroEL.

Its subcellular location is the cytoplasm. Its function is as follows. Together with the chaperonin GroEL, plays an essential role in assisting protein folding. The GroEL-GroES system forms a nano-cage that allows encapsulation of the non-native substrate proteins and provides a physical environment optimized to promote and accelerate protein folding. GroES binds to the apical surface of the GroEL ring, thereby capping the opening of the GroEL channel. This chain is Co-chaperonin GroES, found in Rickettsia rickettsii (strain Sheila Smith).